The primary structure comprises 394 residues: Elongation factor Tu (394 aa).

One can recognise a tr-type G domain in the interval 10–205 (KPHVNIGTIG…VDTWIPLPPR (196 aa)). Residues 19 to 26 (GHVDHGKT) form a G1 region. Position 19-26 (19-26 (GHVDHGKT)) interacts with GTP. Residue threonine 26 participates in Mg(2+) binding. A G2 region spans residues 60-64 (GITIN). A G3 region spans residues 81–84 (DCPG). GTP is bound by residues 81 to 85 (DCPGH) and 136 to 139 (NKCD). A G4 region spans residues 136–139 (NKCD). Positions 174–176 (SAL) are G5.

It belongs to the TRAFAC class translation factor GTPase superfamily. Classic translation factor GTPase family. EF-Tu/EF-1A subfamily. Monomer.

It localises to the cytoplasm. It carries out the reaction GTP + H2O = GDP + phosphate + H(+). Its function is as follows. GTP hydrolase that promotes the GTP-dependent binding of aminoacyl-tRNA to the A-site of ribosomes during protein biosynthesis. The polypeptide is Elongation factor Tu (Bacteroides fragilis (strain ATCC 25285 / DSM 2151 / CCUG 4856 / JCM 11019 / LMG 10263 / NCTC 9343 / Onslow / VPI 2553 / EN-2)).